Consider the following 443-residue polypeptide: Mitochondrial enolase superfamily member 1 (443 aa).

Residues 24–26 (GSD) and Tyr34 contribute to the substrate site. Residue Ser148 is modified to Phosphoserine. Lys220 lines the substrate pocket. Lys222 acts as the Proton donor/acceptor in catalysis. Residue Asp250 coordinates Mg(2+). Substrate is bound by residues Asn252, Glu276, Glu305, 355 to 357 (HAG), and Glu386. Glu276 and Glu305 together coordinate Mg(2+). His355 is a catalytic residue.

This sequence belongs to the mandelate racemase/muconate lactonizing enzyme family. ENOSF1 subfamily. It depends on Mg(2+) as a cofactor. Post-translationally, could be sumoylated.

It is found in the mitochondrion. The catalysed reaction is L-fuconate = 2-dehydro-3-deoxy-L-fuconate + H2O. In terms of biological role, plays a role in the catabolism of L-fucose, a sugar that is part of the carbohydrates that are attached to cellular glycoproteins. Catalyzes the dehydration of L-fuconate to 2-keto-3-deoxy-L-fuconate by the abstraction of the 2-proton to generate an enediolate intermediate that is stabilized by the magnesium ion. May down-regulate thymidylate synthase activity, possibly already at the RNA level, by promoting the degradation of TYMS mRNA via an antisense RNA-based mechanism. The polypeptide is Mitochondrial enolase superfamily member 1 (ENOSF1) (Bos taurus (Bovine)).